The following is a 721-amino-acid chain: Polyribonucleotide nucleotidyltransferase (721 aa).

Positions 490 and 496 each coordinate Mg(2+). A KH domain is found at 557–623; the sequence is PRIISIKINP…RIAGLTKEAK (67 aa). Residues 625 to 693 form the S1 motif domain; the sequence is GEEYEGTVVK…DRGKIDLIRP (69 aa). Residues 693–721 form a disordered region; the sequence is PELEGKIAPREPRAPRGGGDRGPRPPRRD.

It belongs to the polyribonucleotide nucleotidyltransferase family. Mg(2+) is required as a cofactor.

It localises to the cytoplasm. It catalyses the reaction RNA(n+1) + phosphate = RNA(n) + a ribonucleoside 5'-diphosphate. In terms of biological role, involved in mRNA degradation. Catalyzes the phosphorolysis of single-stranded polyribonucleotides processively in the 3'- to 5'-direction. This chain is Polyribonucleotide nucleotidyltransferase, found in Deinococcus deserti (strain DSM 17065 / CIP 109153 / LMG 22923 / VCD115).